The sequence spans 89 residues: Cell division topological specificity factor (89 aa).

The protein belongs to the MinE family.

In terms of biological role, prevents the cell division inhibition by proteins MinC and MinD at internal division sites while permitting inhibition at polar sites. This ensures cell division at the proper site by restricting the formation of a division septum at the midpoint of the long axis of the cell. This is Cell division topological specificity factor from Desulforudis audaxviator (strain MP104C).